Here is a 519-residue protein sequence, read N- to C-terminus: O-fucosyltransferase 31 (519 aa).

A helical; Signal-anchor for type II membrane protein membrane pass occupies residues 18-38; the sequence is ALAGVFVLLFPILYPNLFSPL. An N-linked (GlcNAc...) asparagine glycan is attached at N131. 302–304 provides a ligand contact to substrate; that stretch reads HLR. N-linked (GlcNAc...) asparagine glycans are attached at residues N373 and N474.

The protein belongs to the glycosyltransferase GT106 family.

The protein resides in the membrane. Its pathway is glycan metabolism. The chain is O-fucosyltransferase 31 from Arabidopsis thaliana (Mouse-ear cress).